The sequence spans 299 residues: Regucalcin (299 aa).

Glutamate 18 lines the a divalent metal cation pocket. Substrate contacts are provided by arginine 101, asparagine 103, and glutamate 121. Lysine 144 is modified (N6-succinyllysine). Residues asparagine 154 and aspartate 204 each contribute to the a divalent metal cation site. The Proton donor/acceptor role is filled by aspartate 204. Lysine 244 and lysine 253 each carry N6-succinyllysine.

It belongs to the SMP-30/CGR1 family. In terms of assembly, monomer. Zn(2+) serves as cofactor. Mn(2+) is required as a cofactor. It depends on Ca(2+) as a cofactor. The cofactor is Mg(2+).

It is found in the cytoplasm. The catalysed reaction is D-glucono-1,5-lactone + H2O = D-gluconate + H(+). In terms of biological role, gluconolactonase with low activity towards other sugar lactones, including gulonolactone and galactonolactone. Can also hydrolyze diisopropyl phosphorofluoridate and phenylacetate (in vitro). Calcium-binding protein. Modulates Ca(2+) signaling, and Ca(2+)-dependent cellular processes and enzyme activities. This Macaca fascicularis (Crab-eating macaque) protein is Regucalcin (RGN).